A 992-amino-acid chain; its full sequence is Disks large-associated protein 4 (992 aa).

The segment covering 1 to 20 (MKGLGDSRPRHLSDSLDPPH) has biased composition (basic and acidic residues). 3 disordered regions span residues 1–30 (MKGL…TDRN), 47–66 (PGQN…QLPP), and 157–206 (LEGT…GWWS). Positions 162 to 171 (GKVGGNGSKK) are enriched in gly residues. The span at 172–194 (GGMEDGKGRRAKSKERAKAGEPK) shows a compositional bias: basic and acidic residues. Ser206 and Ser207 each carry phosphoserine. Arg291 bears the Omega-N-methylarginine mark. Positions 342–396 (STTLLSPRETDAAAEGPIPCRRMRSGSYIKAMGDEDSDESGGSPKPSPKTAARRQ) are disordered. Phosphoserine is present on residues Ser378, Ser381, Ser388, Ser405, Ser415, and Ser421. Disordered regions lie at residues 527–751 (SVSL…GPRQ), 763–798 (SYGD…AQPG), and 915–992 (TPEK…QTRL). Over residues 528-554 (VSLQSLSPPPSTGSLSNSRTLPSSSCL) the composition is skewed to low complexity. Over residues 576–591 (VTVQSSTESAQDTYLD) the composition is skewed to polar residues. Phosphoserine occurs at positions 580, 581, 609, 611, 665, and 744. A compositionally biased stretch (low complexity) spans 600–620 (TSQSGLSNSSDSLDSSTRPPS). Residue Thr915 is modified to Phosphothreonine. Composition is skewed to basic and acidic residues over residues 915 to 925 (TPEKRKEEKKP) and 940 to 958 (VSRD…EARK). The span at 969 to 978 (VRQNSATESA) shows a compositional bias: polar residues. At Ser973 the chain carries Phosphoserine.

The protein belongs to the SAPAP family. As to quaternary structure, interacts with DLG1 and DLG4/PSD-95.

The protein resides in the membrane. Functionally, may play a role in the molecular organization of synapses and neuronal cell signaling. Could be an adapter protein linking ion channel to the subsynaptic cytoskeleton. May induce enrichment of PSD-95/SAP90 at the plasma membrane. This is Disks large-associated protein 4 (DLGAP4) from Homo sapiens (Human).